A 708-amino-acid chain; its full sequence is G-box-binding factor (708 aa).

Disordered regions lie at residues 1–29 and 123–339; these read MLST…GSDL and QQAQ…QTIP. Low complexity-rich tracts occupy residues 11–21, 123–219, and 227–316; these read SSSSSSSSSPS, QQAQ…QHHQ, and SQPQ…SPST. Residues 324-333 are compositionally biased toward basic and acidic residues; sequence ETSNSEKKDS. A run of 2 repeats spans residues 339-368 and 481-510. The interval 511-604 is disordered; the sequence is VGAGLSPSSS…PTYSPNPSLP (94 aa). Residues 516-590 are compositionally biased toward low complexity; it reads SPSSSPSSPK…SSISQSPLQL (75 aa). Polar residues predominate over residues 591–600; it reads NYQTPTYSPN.

Its subcellular location is the nucleus. Functionally, cAMP-responsive transcriptional activator regulating late gene expression. Essential component of the developmental switch between early and late development. Binds to a number of CA/GT-rich gene regulatory elements. This chain is G-box-binding factor (gbfA), found in Dictyostelium discoideum (Social amoeba).